A 101-amino-acid polypeptide reads, in one-letter code: Small ribosomal subunit protein uS14 (101 aa).

This sequence belongs to the universal ribosomal protein uS14 family. In terms of assembly, part of the 30S ribosomal subunit. Contacts proteins S3 and S10.

Its function is as follows. Binds 16S rRNA, required for the assembly of 30S particles and may also be responsible for determining the conformation of the 16S rRNA at the A site. This Rhizobium johnstonii (strain DSM 114642 / LMG 32736 / 3841) (Rhizobium leguminosarum bv. viciae) protein is Small ribosomal subunit protein uS14.